The following is a 374-amino-acid chain: UDP-N-acetylglucosamine--N-acetylmuramyl-(pentapeptide) pyrophosphoryl-undecaprenol N-acetylglucosamine transferase (374 aa).

UDP-N-acetyl-alpha-D-glucosamine is bound by residues 13–15, N124, R165, S193, and Q294; that span reads TGG.

The protein belongs to the glycosyltransferase 28 family. MurG subfamily.

It is found in the cell inner membrane. It carries out the reaction di-trans,octa-cis-undecaprenyl diphospho-N-acetyl-alpha-D-muramoyl-L-alanyl-D-glutamyl-meso-2,6-diaminopimeloyl-D-alanyl-D-alanine + UDP-N-acetyl-alpha-D-glucosamine = di-trans,octa-cis-undecaprenyl diphospho-[N-acetyl-alpha-D-glucosaminyl-(1-&gt;4)]-N-acetyl-alpha-D-muramoyl-L-alanyl-D-glutamyl-meso-2,6-diaminopimeloyl-D-alanyl-D-alanine + UDP + H(+). It participates in cell wall biogenesis; peptidoglycan biosynthesis. In terms of biological role, cell wall formation. Catalyzes the transfer of a GlcNAc subunit on undecaprenyl-pyrophosphoryl-MurNAc-pentapeptide (lipid intermediate I) to form undecaprenyl-pyrophosphoryl-MurNAc-(pentapeptide)GlcNAc (lipid intermediate II). In Rhizobium meliloti (strain 1021) (Ensifer meliloti), this protein is UDP-N-acetylglucosamine--N-acetylmuramyl-(pentapeptide) pyrophosphoryl-undecaprenol N-acetylglucosamine transferase.